The chain runs to 37 residues: Large ribosomal subunit protein bL36 (37 aa).

It belongs to the bacterial ribosomal protein bL36 family.

The sequence is that of Large ribosomal subunit protein bL36 from Metamycoplasma arthritidis (strain 158L3-1) (Mycoplasma arthritidis).